The following is a 504-amino-acid chain: Cytochrome P450 3A1 (504 aa).

Residue C443 participates in heme binding.

The protein belongs to the cytochrome P450 family. Requires heme as cofactor.

It localises to the endoplasmic reticulum membrane. The protein resides in the microsome membrane. The catalysed reaction is an organic molecule + reduced [NADPH--hemoprotein reductase] + O2 = an alcohol + oxidized [NADPH--hemoprotein reductase] + H2O + H(+). Functionally, cytochromes P450 are a group of heme-thiolate monooxygenases. In liver microsomes, this enzyme is involved in an NADPH-dependent electron transport pathway. It oxidizes a variety of structurally unrelated compounds, including steroids, fatty acids, and xenobiotics. In Rattus norvegicus (Rat), this protein is Cytochrome P450 3A1 (Cyp3a1).